The following is a 387-amino-acid chain: Cysteine desulfurase (387 aa).

Residues 72 to 73 (GT), N152, Q180, and 200 to 202 (SAH) contribute to the pyridoxal 5'-phosphate site. K203 is modified (N6-(pyridoxal phosphate)lysine). Residue T238 coordinates pyridoxal 5'-phosphate. C323 acts as the Cysteine persulfide intermediate in catalysis. C323 is a [2Fe-2S] cluster binding site.

This sequence belongs to the class-V pyridoxal-phosphate-dependent aminotransferase family. NifS/IscS subfamily. Homodimer. Pyridoxal 5'-phosphate is required as a cofactor.

It carries out the reaction (sulfur carrier)-H + L-cysteine = (sulfur carrier)-SH + L-alanine. Functionally, catalyzes the removal of elemental sulfur atoms from cysteine to produce alanine. Seems to participate in the biosynthesis of the nitrogenase metalloclusters by providing the inorganic sulfur required for the Fe-S core formation. The sequence is that of Cysteine desulfurase from Cereibacter sphaeroides (Rhodobacter sphaeroides).